Consider the following 27-residue polypeptide: Phospholipase A2 1 (27 aa).

It belongs to the phospholipase A2 family. Group I subfamily. Ca(2+) is required as a cofactor. Expressed by the venom gland.

It is found in the secreted. It catalyses the reaction a 1,2-diacyl-sn-glycero-3-phosphocholine + H2O = a 1-acyl-sn-glycero-3-phosphocholine + a fatty acid + H(+). Its function is as follows. Snake venom phospholipase A2 (PLA2) that inhibits neuromuscular transmission by blocking acetylcholine release from the nerve termini. PLA2 catalyzes the calcium-dependent hydrolysis of the 2-acyl groups in 3-sn-phosphoglycerides. This chain is Phospholipase A2 1, found in Micrurus nigrocinctus (Central American coral snake).